We begin with the raw amino-acid sequence, 129 residues long: Large ribosomal subunit protein bL17 (129 aa).

It belongs to the bacterial ribosomal protein bL17 family. Part of the 50S ribosomal subunit. Contacts protein L32.

The protein is Large ribosomal subunit protein bL17 of Thiobacillus denitrificans (strain ATCC 25259 / T1).